A 275-amino-acid chain; its full sequence is Low affinity immunoglobulin gamma Fc region receptor III-A (275 aa).

Positions 1 to 23 (MSVWTSRKAAEDNDTSLSSGIRA) are cleaved as a signal peptide. Topologically, residues 24 to 207 (GLQKAVVTLH…SPSTFPPWHQ (184 aa)) are extracellular. 2 Ig-like C2-type domains span residues 28–92 (AVVT…YTCQ) and 101–192 (PVNL…LRIT). 2 disulfides stabilise this stretch: C49-C91 and C131-C175. N-linked (GlcNAc...) asparagine glycans are attached at residues N65, N168, and N183. The chain crosses the membrane as a helical span at residues 208–228 (ITFCLLIGLLFTIDTVMYFSV). At 229-275 (QKGLRRSTADYEEPEVHWSKEPENKTISEEKQSFRSSRANSETPENR) the chain is on the cytoplasmic side. Positions 237-275 (ADYEEPEVHWSKEPENKTISEEKQSFRSSRANSETPENR) are disordered. At Y239 the chain carries Phosphotyrosine. The segment covering 242-261 (PEVHWSKEPENKTISEEKQS) has biased composition (basic and acidic residues). Residues 262 to 275 (FRSSRANSETPENR) are compositionally biased toward polar residues.

In terms of assembly, forms a heterooligomeric complex with ITAM-containing signaling subunits FCER1G. Interacts (via transmembrane domain) with signaling subunits; this interaction is a prerequisite for receptor complex expression on the cell surface and intracellular signal transduction. Binds the Fc region of antigen-complexed IgG. In terms of processing, N-glycosylated. Post-translationally, phosphorylated following receptor ligation.

The protein localises to the cell membrane. Receptor for the invariable Fc fragment of immunoglobulin gamma (IgG). Binds with intermediate affinity to both IgG2a and IgG2b. Can bind to IgG2a and IgG2b monomers. Does not display binding to IgG1 or IgG3. Recognizes neutralizing virus-specific IgGs displayed on the cell surface of infected cells and triggers antibody-dependent cellular cytotoxicity (ADCC). Confers protection to lethal influenza virus infection. On splenic dendritic cells, uptakes antigen immune complexes and efficiently divert them into MHC class I and II antigen presentation pathways to provide for superior priming of CD4-positive and CD8-positive T cell immune responses. Mediates neutrophil activation by IgG complexes redundantly with FCGR2A. Plays a role in promoting bone resorption by enhancing osteoclast differentiation following binding to IgG2a. Also acts as a receptor for the Fc region of immunoglobulin epsilon (IgE). Binds with low affinity to both the a and b allotypes of IgE. Has also been shown to bind to IgE allotype a only but not to allotype b. Binds aggregated IgE but not the monomeric form and bound monomeric IgG is readily displaced by IgE complexes. Binding to IgE promotes macrophage-mediated phagocytosis, antigen presentation to T cells, production of pro-inflammatory cytokines and the late phase of cutaneous allergic reactions. Mediates enhanced ADCC in response to afucosylated IgGs. This chain is Low affinity immunoglobulin gamma Fc region receptor III-A, found in Cricetulus griseus (Chinese hamster).